Reading from the N-terminus, the 105-residue chain is 5-hydroxymethyl-dUMP N-hydrolase (105 aa).

The 5-hydroxymethyl-dUMP site is built by Gly-6, Ile-8, Ser-42, Gly-44, Glu-48, and Ser-72.

Belongs to the 2'-deoxynucleoside 5'-phosphate N-hydrolase 1 family. In terms of assembly, monomer and homodimer.

It localises to the cytoplasm. Its subcellular location is the nucleus. It catalyses the reaction 5-hydroxymethyl-dUMP + H2O = 5-hydroxymethyluracil + 2-deoxy-D-ribose 5-phosphate. Functionally, part of a nucleotide salvage pathway that eliminates epigenetically modified 5-hydroxymethyl-dCMP (hmdCMP) in a two-step process entailing deamination to cytotoxic 5-hydroxymethyl-dUMP (hmdUMP), followed by its hydrolysis into 5-hydroxymethyluracil (hmU) and 2-deoxy-D-ribose 5-phosphate (deoxyribosephosphate). Catalyzes the second step in that pathway, the hydrolysis of the N-glycosidic bond in hmdUMP, degrading this cytotoxic nucleotide to avoid its genomic integration. The chain is 5-hydroxymethyl-dUMP N-hydrolase from Branchiostoma floridae (Florida lancelet).